The primary structure comprises 42 residues: Photosystem II reaction center protein J (42 aa).

The chain crosses the membrane as a helical span at residues 10 to 30 (IPLWLVGTVVGLLAIGLLALF).

It belongs to the PsbJ family. As to quaternary structure, PSII is composed of 1 copy each of membrane proteins PsbA, PsbB, PsbC, PsbD, PsbE, PsbF, PsbH, PsbI, PsbJ, PsbK, PsbL, PsbM, PsbT, PsbX, PsbY, PsbZ, Psb30/Ycf12, at least 3 peripheral proteins of the oxygen-evolving complex and a large number of cofactors. It forms dimeric complexes.

It is found in the plastid. It localises to the chloroplast thylakoid membrane. Functionally, one of the components of the core complex of photosystem II (PSII). PSII is a light-driven water:plastoquinone oxidoreductase that uses light energy to abstract electrons from H(2)O, generating O(2) and a proton gradient subsequently used for ATP formation. It consists of a core antenna complex that captures photons, and an electron transfer chain that converts photonic excitation into a charge separation. This is Photosystem II reaction center protein J from Mesostigma viride (Green alga).